A 617-amino-acid polypeptide reads, in one-letter code: V-type proton ATPase catalytic subunit A (617 aa).

Position 250–257 (250–257) interacts with ATP; it reads GAFGCGKT.

This sequence belongs to the ATPase alpha/beta chains family. As to quaternary structure, V-ATPase is a heteromultimeric enzyme made up of two complexes: the ATP-hydrolytic V1 complex and the proton translocation V0 complex. The V1 complex consists of three catalytic AB heterodimers that form a heterohexamer, three peripheral stalks each consisting of EG heterodimers, one central rotor including subunits D and F, and the regulatory subunits C and H. The proton translocation complex V0 consists of the proton transport subunit a, a ring of proteolipid subunits c9c'', rotary subunit d, subunits e and f, and the accessory subunits VhaAC45 and ATP6AP2.

The catalysed reaction is ATP + H2O + 4 H(+)(in) = ADP + phosphate + 5 H(+)(out). Its activity is regulated as follows. ATP hydrolysis occurs at the interface between the nucleotide-binding domains of subunits A and B. ATP hydrolysis triggers a conformational change in the subunits D and F, which induces a shift of subunit d. The c-ring is subsequently rotated and results in a continuous proton translocation across the membrane. In terms of biological role, catalytic subunit of the V1 complex of vacuolar(H+)-ATPase (V-ATPase), a multisubunit enzyme composed of a peripheral complex (V1) that hydrolyzes ATP and a membrane integral complex (V0) that translocates protons. V-ATPase is responsible for acidifying and maintaining the pH of intracellular compartments and in some cell types, is targeted to the plasma membrane, where it is responsible for acidifying the extracellular environment. The protein is V-type proton ATPase catalytic subunit A (VHAA) of Manduca sexta (Tobacco hawkmoth).